The primary structure comprises 458 residues: MSQSSASSIFTVSRLNQTVRQLLEMEMGQIWLTAEISNFSQPSSGHWYFTLKDDRAQVRCAMFRNTNRRTTFRPQNGQQVLVRASITLYEPRGDYQLIAESMQPAGDGLLQQQFEQLKQQLAAEGLFDQSHKQPLPSPAKQVGVITSSSGAALHDVLQVLQRRDPSLPVIIYPTAVQGADAPLQIVRAIQLANLRGECDVLIVGRGGGSLEDLWSFNDERVARAIFNSRIPIVSAVGHETDVTIADFVADLRAPTPSAAAELVSRNQIELVRQIQGQQQRMEMAMDYYLAQRHQQLTRLEHRLQQQHPHLRLARQQTLLLKLQRRLEDSAQNQIRRLSRRTERLQQRLVQAQPQGQIHRYNQRVQQQEYRLRQALERQLNGYRQRFGIACSQLEAVSPLATLARGYSVTQTPEGSLLKTTKQVHTGDKLTTRLQDGWVESEITQIKVAKKPRQRKAAN.

The protein belongs to the XseA family. As to quaternary structure, heterooligomer composed of large and small subunits.

It is found in the cytoplasm. It catalyses the reaction Exonucleolytic cleavage in either 5'- to 3'- or 3'- to 5'-direction to yield nucleoside 5'-phosphates.. Its function is as follows. Bidirectionally degrades single-stranded DNA into large acid-insoluble oligonucleotides, which are then degraded further into small acid-soluble oligonucleotides. This is Exodeoxyribonuclease 7 large subunit from Yersinia enterocolitica serotype O:8 / biotype 1B (strain NCTC 13174 / 8081).